The primary structure comprises 279 residues: MMATARPLQLLNTQQHFLNNVLAAWLARGFANKSDEGWLSSMFAHKVDARKDAHSNLLSKKETSNLYKIQFHNVKPEYMEEYNKLSDEVQKELHHDTDYPCEVVGSWNTWYGEQDQAVHLWRYSGGYPALTECLRKLNLNTAYLAFRKERSKMLLSRRNQLLLEFSFWNEPVPRSGSNIYELRSYQLLPGTMIEWGNHWARAIKYRQENNEAVGGFFTQIGDLYVVHHLWAYKDLQSREETRKAAWEKEGWDVSVHYTMPLIQKMESRIMIPMVHSPLQ.

Belongs to the NipSnap family.

The protein resides in the mitochondrion matrix. Protein involved in mitophagy. Accumulates on the mitochondria surface in response to mitochondrial depolarization and acts as a 'eat me' signal by recruiting proteins involved in selective autophagy. This chain is Protein NipSnap homolog 1, found in Danio rerio (Zebrafish).